Here is a 640-residue protein sequence, read N- to C-terminus: 1,4-alpha-glucan branching enzyme GlgB (640 aa).

The active-site Nucleophile is D317. E370 acts as the Proton donor in catalysis.

Belongs to the glycosyl hydrolase 13 family. GlgB subfamily. Monomer.

It catalyses the reaction Transfers a segment of a (1-&gt;4)-alpha-D-glucan chain to a primary hydroxy group in a similar glucan chain.. It participates in glycan biosynthesis; glycogen biosynthesis. Its function is as follows. Catalyzes the formation of the alpha-1,6-glucosidic linkages in glycogen by scission of a 1,4-alpha-linked oligosaccharide from growing alpha-1,4-glucan chains and the subsequent attachment of the oligosaccharide to the alpha-1,6 position. The polypeptide is 1,4-alpha-glucan branching enzyme GlgB (Nitratidesulfovibrio vulgaris (strain ATCC 29579 / DSM 644 / CCUG 34227 / NCIMB 8303 / VKM B-1760 / Hildenborough) (Desulfovibrio vulgaris)).